The chain runs to 270 residues: 3-methyl-2-oxobutanoate hydroxymethyltransferase (270 aa).

Aspartate 50 and aspartate 89 together coordinate Mg(2+). 3-methyl-2-oxobutanoate is bound by residues 50–51 (DS), aspartate 89, and lysine 118. A Mg(2+)-binding site is contributed by glutamate 120. Catalysis depends on glutamate 187, which acts as the Proton acceptor.

Belongs to the PanB family. As to quaternary structure, homodecamer; pentamer of dimers. The cofactor is Mg(2+).

The protein resides in the cytoplasm. It carries out the reaction 3-methyl-2-oxobutanoate + (6R)-5,10-methylene-5,6,7,8-tetrahydrofolate + H2O = 2-dehydropantoate + (6S)-5,6,7,8-tetrahydrofolate. It functions in the pathway cofactor biosynthesis; (R)-pantothenate biosynthesis; (R)-pantoate from 3-methyl-2-oxobutanoate: step 1/2. In terms of biological role, catalyzes the reversible reaction in which hydroxymethyl group from 5,10-methylenetetrahydrofolate is transferred onto alpha-ketoisovalerate to form ketopantoate. The chain is 3-methyl-2-oxobutanoate hydroxymethyltransferase from Helicobacter pylori (strain Shi470).